Here is a 130-residue protein sequence, read N- to C-terminus: DNA-directed RNA polymerase subunit omega (130 aa).

The segment at 80-130 (PEPDTVPLIGSAGASVDADDTEVAPERMTEEELLKGLEGLAPPEEQPEEDE) is disordered. The span at 103-114 (APERMTEEELLK) shows a compositional bias: basic and acidic residues.

Belongs to the RNA polymerase subunit omega family. In terms of assembly, the RNAP catalytic core consists of 2 alpha, 1 beta, 1 beta' and 1 omega subunit. When a sigma factor is associated with the core the holoenzyme is formed, which can initiate transcription.

The catalysed reaction is RNA(n) + a ribonucleoside 5'-triphosphate = RNA(n+1) + diphosphate. Its function is as follows. Promotes RNA polymerase assembly. Latches the N- and C-terminal regions of the beta' subunit thereby facilitating its interaction with the beta and alpha subunits. In Rhodopseudomonas palustris (strain BisB18), this protein is DNA-directed RNA polymerase subunit omega.